The primary structure comprises 621 residues: Putative DNA 3'-5' helicase Rad25 (621 aa).

The 150-residue stretch at 268-417 (VERFTEQGSG…EIFTLIGPPI (150 aa)) folds into the Helicase ATP-binding domain. Position 281–288 (281–288 (GPPGSGKT)) interacts with ATP. Residues 371–374 (DEVH) carry the DEAH box motif. The disordered stretch occupies residues 441 to 465 (PWGDETEQSEYSSTSGHDRRQAAAS). In terms of domain architecture, Helicase C-terminal spans 469–621 (KIDEIRYALA…EAVEPPAKTE (153 aa)).

This sequence belongs to the helicase family. RAD25/XPB subfamily.

The catalysed reaction is Couples ATP hydrolysis with the unwinding of duplex DNA by translocating in the 3'-5' direction.. The enzyme catalyses ATP + H2O = ADP + phosphate + H(+). This Haloarcula marismortui (strain ATCC 43049 / DSM 3752 / JCM 8966 / VKM B-1809) (Halobacterium marismortui) protein is Putative DNA 3'-5' helicase Rad25.